A 513-amino-acid polypeptide reads, in one-letter code: Galactose-1-phosphate uridylyltransferase (513 aa).

This sequence belongs to the galactose-1-phosphate uridylyltransferase type 2 family.

The protein localises to the cytoplasm. The enzyme catalyses alpha-D-galactose 1-phosphate + UDP-alpha-D-glucose = alpha-D-glucose 1-phosphate + UDP-alpha-D-galactose. It functions in the pathway carbohydrate metabolism; galactose metabolism. The protein is Galactose-1-phosphate uridylyltransferase (galT) of Bacillus subtilis (strain 168).